The chain runs to 1035 residues: Calcium-transporting ATPase 7, plasma membrane-type (1035 aa).

Over 1–166 (MECADYFIGS…KGFFRHVWDA (166 aa)) the chain is Cytoplasmic. A helical transmembrane segment spans residues 167–187 (LADVFLIVLLVCAAVSLAFGI). The Extracellular portion of the chain corresponds to 188–194 (KEHGIKD). The helical transmembrane segment at 195–215 (GWYDGVSIFLAVFLVAAVSAV) threads the bilayer. Residues 216-348 (SNHSQGKRFD…DPTPLQERLE (133 aa)) lie on the Cytoplasmic side of the membrane. The helical transmembrane segment at 349-369 (GLTSSIGKVGIAVAVLVFAVL) threads the bilayer. Residues 370–395 (TARHFTGSTRDEQGNALFDKRNVTFN) are Extracellular-facing. Asn-391 is a glycosylation site (N-linked (GlcNAc...) asparagine). The chain crosses the membrane as a helical span at residues 396–416 (AVFSGLVGIFQQAVTIIVVAI). Residues 417-818 (PEGLPLAVTL…GRCVYNNIQK (402 aa)) lie on the Cytoplasmic side of the membrane. The active-site 4-aspartylphosphate intermediate is the Asp-460. Mg(2+) is bound by residues Asp-761 and Asp-765. The chain crosses the membrane as a helical span at residues 819 to 839 (FIQFQLTVNVAALVINFVSAV). Topologically, residues 840–845 (TTGRMP) are extracellular. A helical membrane pass occupies residues 846–866 (LTTVQLLWVNLIMDTMGALAL). Over 867–887 (ATDTPTAGLMRRPPIGRAAPL) the chain is Cytoplasmic. A helical transmembrane segment spans residues 888–910 (ISNAMWRNLAAQAAYQVAVLLAL). Topologically, residues 911–919 (QYRGFGGAG) are extracellular. Residues 920–940 (AGERANGTMIFNAFVLCQVFN) traverse the membrane as a helical segment. Residues 941–960 (EFNAREIERRNVFAGVHRNR) are Cytoplasmic-facing. Residues 961–981 (MFLGIVAVTVALQVVMVELLT) form a helical membrane-spanning segment. Over 982–990 (KFAGTERLG) the chain is Extracellular. The chain crosses the membrane as a helical span at residues 991 to 1011 (WGQWGACVGIAAVSWPIGWAV). Topologically, residues 1012–1035 (KCIPVPERPFHEIITARRRRRRST) are cytoplasmic.

This sequence belongs to the cation transport ATPase (P-type) (TC 3.A.3) family. Type IIB subfamily.

It localises to the golgi apparatus membrane. The catalysed reaction is Ca(2+)(in) + ATP + H2O = Ca(2+)(out) + ADP + phosphate + H(+). Activated by calmodulin. Functionally, this magnesium-dependent enzyme catalyzes the hydrolysis of ATP coupled with the translocation of calcium from the cytosol out of the cell, into the endoplasmic reticulum, or into organelles. Involved in salt stress tolerance. In Oryza sativa subsp. japonica (Rice), this protein is Calcium-transporting ATPase 7, plasma membrane-type.